Consider the following 257-residue polypeptide: Ribonuclease PH (257 aa).

Phosphate is bound by residues Arg86 and 124 to 126; that span reads GTR.

Belongs to the RNase PH family. As to quaternary structure, homohexameric ring arranged as a trimer of dimers.

It carries out the reaction tRNA(n+1) + phosphate = tRNA(n) + a ribonucleoside 5'-diphosphate. In terms of biological role, phosphorolytic 3'-5' exoribonuclease that plays an important role in tRNA 3'-end maturation. Removes nucleotide residues following the 3'-CCA terminus of tRNAs; can also add nucleotides to the ends of RNA molecules by using nucleoside diphosphates as substrates, but this may not be physiologically important. Probably plays a role in initiation of 16S rRNA degradation (leading to ribosome degradation) during starvation. This is Ribonuclease PH from Sulfurihydrogenibium sp. (strain YO3AOP1).